The following is a 161-amino-acid chain: Phosphopantetheine adenylyltransferase (161 aa).

Substrate is bound at residue Thr10. Residues 10–11 (TF) and His18 contribute to the ATP site. Residues Lys42, Leu74, and Arg88 each coordinate substrate. Residues 89–91 (GLR), Glu99, and 124–130 (NAFISSS) contribute to the ATP site.

The protein belongs to the bacterial CoaD family. Homohexamer. Requires Mg(2+) as cofactor.

The protein localises to the cytoplasm. It carries out the reaction (R)-4'-phosphopantetheine + ATP + H(+) = 3'-dephospho-CoA + diphosphate. It participates in cofactor biosynthesis; coenzyme A biosynthesis; CoA from (R)-pantothenate: step 4/5. Functionally, reversibly transfers an adenylyl group from ATP to 4'-phosphopantetheine, yielding dephospho-CoA (dPCoA) and pyrophosphate. The chain is Phosphopantetheine adenylyltransferase from Wolinella succinogenes (strain ATCC 29543 / DSM 1740 / CCUG 13145 / JCM 31913 / LMG 7466 / NCTC 11488 / FDC 602W) (Vibrio succinogenes).